The primary structure comprises 282 residues: (4-alkanoyl-5-oxo-2,5-dihydrofuran-3-yl)methyl phosphate reductase (282 aa).

An NADP(+)-binding site is contributed by 6–11 (GATGAV).

This sequence belongs to the NmrA-type oxidoreductase family.

It carries out the reaction a [(3S,4R)-4-alkanoyl-5-oxooxolan-3-yl]methyl phosphate + NADP(+) = a (4-alkanoyl-5-oxo-2,5-dihydrofuran-3-yl)methyl phosphate + NADPH + H(+). It catalyses the reaction [(3S,4R)-4-(6-methylheptanoyl)-5-oxooxolan-3-yl]methyl phosphate + NADP(+) = [4-(6-methylheptanoyl)-5-oxo-2H-furan-3-yl]methyl phosphate + NADPH + H(+). Functionally, involved in the biosynthesis of A factor (2-isocapryloyl-3R-hydroxymethyl-gamma-butyrolactone), a gamma-butyrolactone autoregulator that triggers secondary metabolism and morphogenesis in Streptomyces. Catalyzes the reduction of the butenolide phosphate produced by nonenzymatic intramolecular condensation of the 8-methyl-3-oxononanoyl-DHAP ester. The polypeptide is (4-alkanoyl-5-oxo-2,5-dihydrofuran-3-yl)methyl phosphate reductase (Streptomyces griseus subsp. griseus (strain JCM 4626 / CBS 651.72 / NBRC 13350 / KCC S-0626 / ISP 5235)).